Here is a 336-residue protein sequence, read N- to C-terminus: Geranylgeranyl pyrophosphate synthase 6, mitochondrial (336 aa).

A mitochondrion-targeting transit peptide spans 1 to 22 (MRPRYSLILSAMRLIRPSNRRL). Isopentenyl diphosphate is bound by residues K80, R83, and H112. Positions 119 and 125 each coordinate Mg(2+). R130 lines the dimethylallyl diphosphate pocket. Residue R131 coordinates isopentenyl diphosphate. The dimethylallyl diphosphate site is built by K221, T222, Q259, K276, and K286.

Belongs to the FPP/GGPP synthase family. As to quaternary structure, monomer. It depends on Mg(2+) as a cofactor.

It is found in the mitochondrion. The catalysed reaction is isopentenyl diphosphate + dimethylallyl diphosphate = (2E)-geranyl diphosphate + diphosphate. The enzyme catalyses isopentenyl diphosphate + (2E)-geranyl diphosphate = (2E,6E)-farnesyl diphosphate + diphosphate. It catalyses the reaction isopentenyl diphosphate + (2E,6E)-farnesyl diphosphate = (2E,6E,10E)-geranylgeranyl diphosphate + diphosphate. Its pathway is isoprenoid biosynthesis; farnesyl diphosphate biosynthesis; farnesyl diphosphate from geranyl diphosphate and isopentenyl diphosphate: step 1/1. It functions in the pathway isoprenoid biosynthesis; geranyl diphosphate biosynthesis; geranyl diphosphate from dimethylallyl diphosphate and isopentenyl diphosphate: step 1/1. It participates in isoprenoid biosynthesis; geranylgeranyl diphosphate biosynthesis; geranylgeranyl diphosphate from farnesyl diphosphate and isopentenyl diphosphate: step 1/1. Functionally, catalyzes the trans-addition of the three molecules of IPP onto DMAPP to form geranylgeranyl pyrophosphate. The sequence is that of Geranylgeranyl pyrophosphate synthase 6, mitochondrial from Arabidopsis thaliana (Mouse-ear cress).